The primary structure comprises 206 residues: N-(5'-phosphoribosyl)anthranilate isomerase (206 aa).

The protein belongs to the TrpF family.

The enzyme catalyses N-(5-phospho-beta-D-ribosyl)anthranilate = 1-(2-carboxyphenylamino)-1-deoxy-D-ribulose 5-phosphate. It functions in the pathway amino-acid biosynthesis; L-tryptophan biosynthesis; L-tryptophan from chorismate: step 3/5. This is N-(5'-phosphoribosyl)anthranilate isomerase from Nitrosococcus oceani (strain ATCC 19707 / BCRC 17464 / JCM 30415 / NCIMB 11848 / C-107).